A 255-amino-acid chain; its full sequence is Small ribosomal subunit protein uS2 (255 aa).

Positions 231–255 (RLQTGAEEEFSTEGEEVVEETPAEA) are disordered. A compositionally biased stretch (acidic residues) spans 236 to 255 (AEEEFSTEGEEVVEETPAEA).

This sequence belongs to the universal ribosomal protein uS2 family.

The sequence is that of Small ribosomal subunit protein uS2 from Geobacter sp. (strain M21).